We begin with the raw amino-acid sequence, 128 residues long: Regulator of ribonuclease activity B (128 aa).

It belongs to the RraB family. In terms of assembly, interacts with the C-terminal region of Rne.

The protein localises to the cytoplasm. In terms of biological role, globally modulates RNA abundance by binding to RNase E (Rne) and regulating its endonucleolytic activity. Can modulate Rne action in a substrate-dependent manner by altering the composition of the degradosome. The sequence is that of Regulator of ribonuclease activity B from Idiomarina loihiensis (strain ATCC BAA-735 / DSM 15497 / L2-TR).